The primary structure comprises 508 residues: Cobyric acid synthase (508 aa).

The 200-residue stretch at E255–W454 folds into the GATase cobBQ-type domain. Residue C336 is the Nucleophile of the active site. Residue H446 is part of the active site.

This sequence belongs to the CobB/CobQ family. CobQ subfamily.

It participates in cofactor biosynthesis; adenosylcobalamin biosynthesis. In terms of biological role, catalyzes amidations at positions B, D, E, and G on adenosylcobyrinic A,C-diamide. NH(2) groups are provided by glutamine, and one molecule of ATP is hydrogenolyzed for each amidation. The sequence is that of Cobyric acid synthase from Synechococcus sp. (strain CC9311).